Here is a 408-residue protein sequence, read N- to C-terminus: Imidazolonepropionase (408 aa).

2 residues coordinate Fe(3+): H73 and H75. Positions 73 and 75 each coordinate Zn(2+). R82, Y145, and H178 together coordinate 4-imidazolone-5-propanoate. An N-formimidoyl-L-glutamate-binding site is contributed by Y145. H243 lines the Fe(3+) pocket. H243 is a Zn(2+) binding site. A 4-imidazolone-5-propanoate-binding site is contributed by Q246. Fe(3+) is bound at residue D318. D318 lines the Zn(2+) pocket. Residues N320 and G322 each contribute to the N-formimidoyl-L-glutamate site. S323 is a 4-imidazolone-5-propanoate binding site.

This sequence belongs to the metallo-dependent hydrolases superfamily. HutI family. Zn(2+) is required as a cofactor. Requires Fe(3+) as cofactor.

It localises to the cytoplasm. It carries out the reaction 4-imidazolone-5-propanoate + H2O = N-formimidoyl-L-glutamate. It participates in amino-acid degradation; L-histidine degradation into L-glutamate; N-formimidoyl-L-glutamate from L-histidine: step 3/3. Its function is as follows. Catalyzes the hydrolytic cleavage of the carbon-nitrogen bond in imidazolone-5-propanoate to yield N-formimidoyl-L-glutamate. It is the third step in the universal histidine degradation pathway. The sequence is that of Imidazolonepropionase from Shewanella baltica (strain OS185).